The sequence spans 356 residues: Protein HEXIM1 (356 aa).

Basic and acidic residues-rich tracts occupy residues 1 to 11 (MAEPLLSEHQH) and 24 to 47 (VHEE…DSRW). The segment at 1-160 (MAEPLLSEHQ…RRRPSKKKRH (160 aa)) is disordered. Residues 48–58 (QSRASLQSGSR) show a composition bias toward polar residues. Basic and acidic residues predominate over residues 84 to 93 (CLEKGEKGQN). Residues Ser-98 and Ser-103 each carry the phosphoserine modification. Residues 145–160 (LGKKKHRRRPSKKKRH) show a composition bias toward basic residues. The segment at 147 to 174 (KKKHRRRPSKKKRHWKPYYKLTWEEKKK) is basic region; mediates nuclear localization and interaction with 7SK snRNA and NR3C1. The interval 199–202 (PYNT) is interaction with P-TEFb. The segment at 207–247 (MDDHDQEEPDLKTGLYPKRAAAKSDDTSDEDFVEEAGEEDG) is autoinhibitory acidic region; in absence of 7SK snRNA interacts with the basic region preventing interaction with P-TEFb and modulating subcellular localization. Residues 209–259 (DHDQEEPDLKTGLYPKRAAAKSDDTSDEDFVEEAGEEDGGSDGMGGDGSEF) form a disordered region. Ser-230 carries the phosphoserine modification. At Thr-233 the chain carries Phosphothreonine. Over residues 233 to 248 (TSDEDFVEEAGEEDGG) the composition is skewed to acidic residues. Ser-234, Ser-249, and Ser-257 each carry phosphoserine. Positions 280–346 (SKQELIKEYL…LTENELHRQQ (67 aa)) form a coiled coil. The tract at residues 283–311 (ELIKEYLELEKCLSRKEDENNRLRLESKR) is mediates interaction with CCNT1. Residues 307-352 (LESKRLGGVDARVRELELELDRLRAENRQLLTENELHRQQERAPPS) are required for inhibition of ESR1-dependent transcription. Residues 337-356 (LTENELHRQQERAPPSKFGD) are disordered.

This sequence belongs to the HEXIM family. As to quaternary structure, homooligomer and heterooligomer with HEXIM2; probably dimeric. Core component of the 7SK RNP complex, at least composed of 7SK RNA, LARP7, MEPCE, HEXIM1 (or HEXIM2) and P-TEFb (composed of CDK9 and CCNT1/cyclin-T1). Interacts with the N-CoR complex through NCOR1. Interacts with ESR1 and NR3C1. May interact with NF-kappa-B through RELA. Interacts with CCNT2; mediates formation of a tripartite complex with KPNA2. Part of the HDP-RNP complex composed of at least HEXIM1, PRKDC, XRCC5, XRCC6, paraspeckle proteins (SFPQ, NONO, PSPC1, RBM14, and MATR3) and NEAT1 non-coding RNA.

Its subcellular location is the nucleus. The protein resides in the cytoplasm. Functionally, transcriptional regulator which functions as a general RNA polymerase II transcription inhibitor. Core component of the 7SK RNP complex: in cooperation with 7SK snRNA sequesters P-TEFb in a large inactive 7SK snRNP complex preventing RNA polymerase II phosphorylation and subsequent transcriptional elongation. May also regulate NF-kappa-B, ESR1, NR3C1 and CIITA-dependent transcriptional activity. Plays a role in the regulation of DNA virus-mediated innate immune response by assembling into the HDP-RNP complex, a complex that serves as a platform for IRF3 phosphorylation and subsequent innate immune response activation through the cGAS-STING pathway. This Rattus norvegicus (Rat) protein is Protein HEXIM1 (Hexim1).